We begin with the raw amino-acid sequence, 309 residues long: Dehydrogenase/reductase SDR family member 7B (309 aa).

The Cytoplasmic portion of the chain corresponds to 1-5; it reads MERAL. Residues 6–26 traverse the membrane as a helical; Signal-anchor for type II membrane protein segment; the sequence is GVGIGPLAAGTVGLLILLKVI. The Lumenal portion of the chain corresponds to 27–271; sequence QRLRRRPNIQ…LKAVCQKKKD (245 aa). 2 residues coordinate NAD(+): Ser47 and Leu49. A substrate-binding site is contributed by Ser179. NAD(+)-binding residues include Tyr192, Lys196, and Thr227. The active-site Proton acceptor is Tyr192.

It belongs to the short-chain dehydrogenases/reductases (SDR) family.

Its subcellular location is the endoplasmic reticulum membrane. Its function is as follows. Putative oxidoreductase. The chain is Dehydrogenase/reductase SDR family member 7B (dhrs7b) from Danio rerio (Zebrafish).